Here is a 266-residue protein sequence, read N- to C-terminus: MPKGKKAKGKKVAPAPAVVKKQEAKKVVNPLFEKRPKNFGIGQDIQPKRDLTRFVKWPRYIRLQRQRAILYKRLKVPPAINQFTQALDRQTATQLLKLAHKYRPETKQEKKQRLLARAEKKAAGKGDVPTKRPPVLRAGVNTVTTLVENKKAQLVVIAHDVDPIELVVFLPALCRKMGVPYCIIKGKARLGRLVHRKTCTTVAFTQVNSEDKSALAKLVEAIRTNYNDRYDEIRRHWGGNVLGPKSVARIAKLEKAKAKELATKLG.

Glycyl lysine isopeptide (Lys-Gly) (interchain with G-Cter in SUMO2) cross-links involve residues K11, K20, and K21. K34 is modified (N6-acetyllysine). K48 participates in a covalent cross-link: Glycyl lysine isopeptide (Lys-Gly) (interchain with G-Cter in SUMO2). K97 carries the N6-acetyllysine; alternate modification. Residue K97 forms a Glycyl lysine isopeptide (Lys-Gly) (interchain with G-Cter in SUMO2); alternate linkage. A Glycyl lysine isopeptide (Lys-Gly) (interchain with G-Cter in SUMO2) cross-link involves residue K125. K217 bears the N6-acetyllysine mark. K245 participates in a covalent cross-link: Glycyl lysine isopeptide (Lys-Gly) (interchain with G-Cter in SUMO2).

Belongs to the eukaryotic ribosomal protein eL8 family. In terms of assembly, component of the large ribosomal subunit. Interacts with CRY1. Interacts with DICER1, AGO2, TARBP2, MOV10 and EIF6; they form a large RNA-induced silencing complex (RISC).

It localises to the cytoplasm. Its function is as follows. Component of the large ribosomal subunit. The ribosome is a large ribonucleoprotein complex responsible for the synthesis of proteins in the cell. This Bos taurus (Bovine) protein is Large ribosomal subunit protein eL8 (RPL7A).